The sequence spans 97 residues: Essential MCU regulator, mitochondrial (97 aa).

The N-terminal 35 residues, 1–35 (MIVPRLALPISLALQRVSRRVAEHPHNLRILQRHM), are a transit peptide targeting the mitochondrion. A helical transmembrane segment spans residues 53–73 (PFGLLAIFCAVIPGLFVGATI).

This sequence belongs to the SMDT1/EMRE family.

The protein resides in the mitochondrion inner membrane. In terms of biological role, essential regulatory subunit of the mitochondrial calcium uniporter MCU channel, a protein that mediates calcium uptake into mitochondria. The sequence is that of Essential MCU regulator, mitochondrial from Drosophila melanogaster (Fruit fly).